A 416-amino-acid chain; its full sequence is Glutamyl-tRNA reductase (416 aa).

Substrate is bound by residues 49–52 (TCNR), S105, 110–112 (EPQ), and Q116. The active-site Nucleophile is the C50. An NADP(+)-binding site is contributed by 185-190 (GAGETI).

It belongs to the glutamyl-tRNA reductase family. As to quaternary structure, homodimer.

It carries out the reaction (S)-4-amino-5-oxopentanoate + tRNA(Glu) + NADP(+) = L-glutamyl-tRNA(Glu) + NADPH + H(+). It participates in porphyrin-containing compound metabolism; protoporphyrin-IX biosynthesis; 5-aminolevulinate from L-glutamyl-tRNA(Glu): step 1/2. Catalyzes the NADPH-dependent reduction of glutamyl-tRNA(Glu) to glutamate 1-semialdehyde (GSA). The protein is Glutamyl-tRNA reductase of Shewanella loihica (strain ATCC BAA-1088 / PV-4).